We begin with the raw amino-acid sequence, 727 residues long: Probable copper-importing P-type ATPase A (727 aa).

At 1 to 94 (MATNTKMETF…QTYLRKMKFD (94 aa)) the chain is on the cytoplasmic side. Residues 6-70 (KMETFVITGM…SVENIGYGAI (65 aa)) enclose the HMA domain. Cu(+) contacts are provided by Cys-17 and Cys-20. The helical transmembrane segment at 95-115 (LIFSAILTLPLMLAMIAMMLG) threads the bilayer. Residues 116 to 119 (SHGP) are Extracellular-facing. A helical membrane pass occupies residues 120–137 (IVSFFHLSLVQLLFALPV). Residues 138–161 (QFYVGWRFYKGAYHALKTKAPNMD) are Cytoplasmic-facing. A helical transmembrane segment spans residues 162 to 181 (VLVAIGTSAAFALSIYNGFF). The Extracellular portion of the chain corresponds to 182–187 (PSHSHD). The helical transmembrane segment at 188–203 (LYFESSSMIITLILLG) threads the bilayer. Residues 204–341 (KYLEHTAKSK…PIQQIADKIS (138 aa)) lie on the Cytoplasmic side of the membrane. The helical transmembrane segment at 342-362 (GIFVPIVLFLALVTLLVTGWL) threads the bilayer. Topologically, residues 363-375 (TKDWQLALLHSVS) are extracellular. The helical transmembrane segment at 376-396 (VLVIACPCALGLATPTAIMVG) threads the bilayer. At 397 to 678 (TGVGAHNGIL…AATLKKIKQN (282 aa)) the chain is on the cytoplasmic side. Residue Asp-425 is the 4-aspartylphosphate intermediate of the active site. The Mg(2+) site is built by Asp-621 and Asp-625. A helical membrane pass occupies residues 679-698 (LFWAFIYNTIGIPFAAFGFL). Topologically, residues 699-700 (NP) are extracellular. The chain crosses the membrane as a helical span at residues 701–721 (IIAGGAMAFSSISVLLNSLSL). Residues 722–727 (NRKTIK) are Cytoplasmic-facing.

It belongs to the cation transport ATPase (P-type) (TC 3.A.3) family. Type IB subfamily. In terms of assembly, monomer. Interacts with the copper chaperone CopZ.

The protein localises to the cell membrane. The enzyme catalyses Cu(+)(in) + ATP + H2O = Cu(+)(out) + ADP + phosphate + H(+). With respect to regulation, inhibited by vanadate. Its function is as follows. Probably involved in copper import under copper limiting conditions. In Enterococcus hirae (strain ATCC 9790 / DSM 20160 / JCM 8729 / LMG 6399 / NBRC 3181 / NCIMB 6459 / NCDO 1258 / NCTC 12367 / WDCM 00089 / R), this protein is Probable copper-importing P-type ATPase A (copA).